The sequence spans 95 residues: Co-chaperonin GroES (95 aa).

The protein belongs to the GroES chaperonin family. As to quaternary structure, heptamer of 7 subunits arranged in a ring. Interacts with the chaperonin GroEL.

The protein resides in the cytoplasm. Together with the chaperonin GroEL, plays an essential role in assisting protein folding. The GroEL-GroES system forms a nano-cage that allows encapsulation of the non-native substrate proteins and provides a physical environment optimized to promote and accelerate protein folding. GroES binds to the apical surface of the GroEL ring, thereby capping the opening of the GroEL channel. The polypeptide is Co-chaperonin GroES (Stenotrophomonas maltophilia (strain K279a)).